The chain runs to 156 residues: Low molecular weight protein-tyrosine-phosphatase YfkJ (156 aa).

Catalysis depends on C8, which acts as the Nucleophile. R14 is a catalytic residue. The Proton donor role is filled by D125.

The protein belongs to the low molecular weight phosphotyrosine protein phosphatase family.

The enzyme catalyses O-phospho-L-tyrosyl-[protein] + H2O = L-tyrosyl-[protein] + phosphate. Efficiently inhibited by Cu(2+) ion, Zn(2+) ion and N-ethylmaleimide, while the addition of Mg(2+), Ca(2+) or Fe(3+) ions has minimal effect. Inhibited in a competitive manner by vanadate. Dephosphorylates the phosphotyrosine-containing proteins. Involved in ethanol stress resistance. This is Low molecular weight protein-tyrosine-phosphatase YfkJ (yfkJ) from Bacillus subtilis (strain 168).